A 119-amino-acid chain; its full sequence is Aspartate 1-decarboxylase (119 aa).

Residue S25 is the Schiff-base intermediate with substrate; via pyruvic acid of the active site. S25 carries the post-translational modification Pyruvic acid (Ser). T57 provides a ligand contact to substrate. Y58 acts as the Proton donor in catalysis. G73–A75 provides a ligand contact to substrate.

It belongs to the PanD family. Heterooctamer of four alpha and four beta subunits. Pyruvate serves as cofactor. In terms of processing, is synthesized initially as an inactive proenzyme, which is activated by self-cleavage at a specific serine bond to produce a beta-subunit with a hydroxyl group at its C-terminus and an alpha-subunit with a pyruvoyl group at its N-terminus.

It localises to the cytoplasm. The catalysed reaction is L-aspartate + H(+) = beta-alanine + CO2. The protein operates within cofactor biosynthesis; (R)-pantothenate biosynthesis; beta-alanine from L-aspartate: step 1/1. In terms of biological role, catalyzes the pyruvoyl-dependent decarboxylation of aspartate to produce beta-alanine. The protein is Aspartate 1-decarboxylase of Thermosipho melanesiensis (strain DSM 12029 / CIP 104789 / BI429).